Here is a 556-residue protein sequence, read N- to C-terminus: Membrane protein insertase YidC (556 aa).

Transmembrane regions (helical) follow at residues 6–26 (IVLY…WQID), 332–352 (LDLT…FSLM), 358–378 (VVGN…LAFY), 428–448 (LGGC…YWVL), and 501–521 (VMMF…SGLV).

It belongs to the OXA1/ALB3/YidC family. Type 1 subfamily. In terms of assembly, interacts with the Sec translocase complex via SecD. Specifically interacts with transmembrane segments of nascent integral membrane proteins during membrane integration.

It is found in the cell inner membrane. Functionally, required for the insertion and/or proper folding and/or complex formation of integral membrane proteins into the membrane. Involved in integration of membrane proteins that insert both dependently and independently of the Sec translocase complex, as well as at least some lipoproteins. Aids folding of multispanning membrane proteins. This is Membrane protein insertase YidC from Legionella pneumophila (strain Lens).